We begin with the raw amino-acid sequence, 196 residues long: Probable malonic semialdehyde reductase RutE (196 aa).

It belongs to the nitroreductase family. HadB/RutE subfamily. The cofactor is FMN.

It catalyses the reaction 3-hydroxypropanoate + NADP(+) = 3-oxopropanoate + NADPH + H(+). Its function is as follows. May reduce toxic product malonic semialdehyde to 3-hydroxypropionic acid, which is excreted. The chain is Probable malonic semialdehyde reductase RutE from Escherichia coli O81 (strain ED1a).